A 77-amino-acid chain; its full sequence is Conotoxin Vc6.14 (77 aa).

Positions 1–19 (MEKLTILLLVAAVLMSTQA) are cleaved as a signal peptide. The propeptide occupies 20–37 (MFQGGGEKRPKDKIKFLS). 3 disulfides stabilise this stretch: C51–C65, C58–C69, and C64–C74.

This sequence belongs to the conotoxin O2 superfamily. In terms of tissue distribution, expressed by the venom duct.

Its subcellular location is the secreted. In terms of biological role, inhibits voltage-gated ion channels. This Conus victoriae (Queen Victoria cone) protein is Conotoxin Vc6.14.